The chain runs to 405 residues: Acetylornithine aminotransferase 1 (405 aa).

Residues 108 to 109 and F141 each bind pyridoxal 5'-phosphate; that span reads GA. Position 144 (R144) interacts with N(2)-acetyl-L-ornithine. 226–229 provides a ligand contact to pyridoxal 5'-phosphate; it reads DEVQ. K255 is modified (N6-(pyridoxal phosphate)lysine). T283 is a N(2)-acetyl-L-ornithine binding site. T284 serves as a coordination point for pyridoxal 5'-phosphate.

This sequence belongs to the class-III pyridoxal-phosphate-dependent aminotransferase family. ArgD subfamily. Homodimer. The cofactor is pyridoxal 5'-phosphate.

The protein resides in the cytoplasm. The enzyme catalyses N(2)-acetyl-L-ornithine + 2-oxoglutarate = N-acetyl-L-glutamate 5-semialdehyde + L-glutamate. The protein operates within amino-acid biosynthesis; L-arginine biosynthesis; N(2)-acetyl-L-ornithine from L-glutamate: step 4/4. This Pseudomonas syringae pv. tomato (strain ATCC BAA-871 / DC3000) protein is Acetylornithine aminotransferase 1.